Here is a 606-residue protein sequence, read N- to C-terminus: Elongation factor 4 (606 aa).

The tr-type G domain maps to 10-192; that stretch reads ENIRNFSIIA…AIVQQLPAPK (183 aa). GTP-binding positions include 22–27 and 139–142; these read DHGKST and NKID.

It belongs to the TRAFAC class translation factor GTPase superfamily. Classic translation factor GTPase family. LepA subfamily.

It is found in the cell membrane. It catalyses the reaction GTP + H2O = GDP + phosphate + H(+). Required for accurate and efficient protein synthesis under certain stress conditions. May act as a fidelity factor of the translation reaction, by catalyzing a one-codon backward translocation of tRNAs on improperly translocated ribosomes. Back-translocation proceeds from a post-translocation (POST) complex to a pre-translocation (PRE) complex, thus giving elongation factor G a second chance to translocate the tRNAs correctly. Binds to ribosomes in a GTP-dependent manner. The protein is Elongation factor 4 of Lawsonia intracellularis (strain PHE/MN1-00).